Reading from the N-terminus, the 184-residue chain is ATP synthase subunit b, chloroplastic (184 aa).

A helical membrane pass occupies residues 27-49; that stretch reads LATNPINLSVVLGVLIFFGKGVL.

It belongs to the ATPase B chain family. In terms of assembly, F-type ATPases have 2 components, F(1) - the catalytic core - and F(0) - the membrane proton channel. F(1) has five subunits: alpha(3), beta(3), gamma(1), delta(1), epsilon(1). F(0) has four main subunits: a(1), b(1), b'(1) and c(10-14). The alpha and beta chains form an alternating ring which encloses part of the gamma chain. F(1) is attached to F(0) by a central stalk formed by the gamma and epsilon chains, while a peripheral stalk is formed by the delta, b and b' chains.

It is found in the plastid. The protein resides in the chloroplast thylakoid membrane. Its function is as follows. F(1)F(0) ATP synthase produces ATP from ADP in the presence of a proton or sodium gradient. F-type ATPases consist of two structural domains, F(1) containing the extramembraneous catalytic core and F(0) containing the membrane proton channel, linked together by a central stalk and a peripheral stalk. During catalysis, ATP synthesis in the catalytic domain of F(1) is coupled via a rotary mechanism of the central stalk subunits to proton translocation. Component of the F(0) channel, it forms part of the peripheral stalk, linking F(1) to F(0). This Ceratophyllum demersum (Rigid hornwort) protein is ATP synthase subunit b, chloroplastic.